The sequence spans 477 residues: Epoxyalcohol synthase CYP5164B1 (477 aa).

Position 421 (Cys421) interacts with heme.

Belongs to the cytochrome P450 family. Heme is required as a cofactor.

The catalysed reaction is (9S)-hydroperoxy-(10E,12Z)-octadecadienoate = (11S)-hydroxy-(9S,10S)-epoxy-(12Z)-octadecenoate. The enzyme catalyses (13S)-hydroperoxy-(9Z,11E)-octadecadienoate = 11-hydroxy-12,13-epoxy-(9Z)-octadecenoate. The protein operates within lipid metabolism; oxylipin biosynthesis. Its function is as follows. Cytochrome P450 epoxyalcohol synthase involved in the metabolism of oxylipins 'ectocarpins' natural products, such as hybridalactone, ecklonilactones and derivatives. Isomerizes the hydroperoxides into epoxyalcohols via epoxyallylic radical. Can use linoleic acid 9-hydroperoxide ((9S,10E,12Z)-9-hydroperoxy-10,12-octadecadienoic, 9-HPOD) as preferred substrate to produce (9S,10S,11S,12Z)-9,10-epoxy-11-hydroxy-12-octadecenoic acid and, to a lower extent, active with linoleate 13-hydroperoxide ((9Z,11E,13S)-13-hydroperoxy-9,11-octadecadienoic, 13-HPOD) to produce 11-hydroxy-12,13-epoxy-9-octadecenoic acid. No activity toward alpha-linolenic acid 9- and 13-hydroperoxides, and toward eicosapentaenoic acid 15-hydroperoxide. This chain is Epoxyalcohol synthase CYP5164B1, found in Ectocarpus siliculosus (Brown alga).